We begin with the raw amino-acid sequence, 290 residues long: Eukaryotic translation initiation factor 3 subunit G (290 aa).

Disordered stretches follow at residues 1 to 35 (MSRLGNRADWADDEEFDDPSALPPQQVTTNKDGTK) and 157 to 200 (ESTG…GERM). One can recognise an RRM domain in the interval 210-288 (ATLRVTNVSE…LILRVEFAKR (79 aa)).

The protein belongs to the eIF-3 subunit G family. Component of the eukaryotic translation initiation factor 3 (eIF-3) complex.

It is found in the cytoplasm. In terms of biological role, RNA-binding component of the eukaryotic translation initiation factor 3 (eIF-3) complex, which is involved in protein synthesis of a specialized repertoire of mRNAs and, together with other initiation factors, stimulates binding of mRNA and methionyl-tRNAi to the 40S ribosome. The eIF-3 complex specifically targets and initiates translation of a subset of mRNAs involved in cell proliferation. This subunit can bind 18S rRNA. The polypeptide is Eukaryotic translation initiation factor 3 subunit G (tif35) (Aspergillus clavatus (strain ATCC 1007 / CBS 513.65 / DSM 816 / NCTC 3887 / NRRL 1 / QM 1276 / 107)).